The primary structure comprises 1456 residues: Putative 1-phosphatidylinositol-3-phosphate 5-kinase FAB1D (1456 aa).

Positions 1 to 19 are enriched in low complexity; the sequence is MTPSNSLSSSERSLSGECS. Disordered stretches follow at residues 1-110, 533-592, 925-944, 967-987, 1003-1022, and 1137-1159; these read MTPS…EVDG, PVSV…NDIE, ENDNKVSDSGSNGGIDTPLV, VPEDNESQTLCSSSPDTTSPI, NGQEADKSIPVTGESLDDEV, and NNQDSKQTDRDVSRFSSESTNRL. Basic and acidic residues predominate over residues 43 to 57; sequence ELTKEVKVDRLERKS. Residues 86-110 show a composition bias toward acidic residues; sequence REDDSDDVPVWEPPEPENPEDEVDG. Residues 533-544 are compositionally biased toward low complexity; it reads PVSVDTDVSTTS. The span at 973 to 987 shows a compositional bias: polar residues; sequence SQTLCSSSPDTTSPI. The 329-residue stretch at 1115-1443 folds into the PIPK domain; the sequence is NNEESKKPLS…RFRKFMKTHF (329 aa). Residues 1150-1159 are compositionally biased toward polar residues; sequence RFSSESTNRL.

Component of the PI(3,5)P2 regulatory complex at least composed of ATG18, SAC/FIG4, FAB1 and VAC14. The cofactor is Mg(2+). Mn(2+) is required as a cofactor.

It carries out the reaction a 1,2-diacyl-sn-glycero-3-phospho-(1D-myo-inositol-3-phosphate) + ATP = a 1,2-diacyl-sn-glycero-3-phospho-(1D-myo-inositol-3,5-bisphosphate) + ADP + H(+). In terms of biological role, the PI(3,5)P2 regulatory complex regulates both the synthesis and turnover of phosphatidylinositol 3,5-bisphosphate (PtdIns(3,5)P2). Catalyzes the phosphorylation of phosphatidylinositol 3-phosphate on the fifth hydroxyl of the myo-inositol ring, to form phosphatidylinositol 3,5-bisphosphate. This Arabidopsis thaliana (Mouse-ear cress) protein is Putative 1-phosphatidylinositol-3-phosphate 5-kinase FAB1D (FAB1D).